The chain runs to 275 residues: Protein FAM210A (275 aa).

The disordered stretch occupies residues 51 to 100 (KWLHSQPKQQDTATKTPVHDLPSGIQHQSEETSPSARSSISTDPSSIAEE). Polar residues-rich tracts occupy residues 56–65 (QPKQQDTATK) and 75–95 (IQHQSEETSPSARSSISTDPS). In terms of domain architecture, DUF1279 spans 105 to 217 (DQSIGLLKRF…GYLSTPPLVK (113 aa)). The helical transmembrane segment at 124–144 (VLIPVHLVTSSIWFGSFYYAA) threads the bilayer. The stretch at 221–275 (QDRMEETKELFTEKMEETRDIISGKMEETKDRISEKLQETKDRVAFRKKKNEDME) forms a coiled coil.

Belongs to the FAM210 family.

It localises to the membrane. The protein resides in the mitochondrion. It is found in the cytoplasm. In terms of biological role, may play a role in the structure and strength of both muscle and bone. In Xenopus laevis (African clawed frog), this protein is Protein FAM210A (fam210a).